Consider the following 656-residue polypeptide: Chaperone protein HtpG (656 aa).

The a; substrate-binding stretch occupies residues 1-359 (MSAQVEQLEF…AEDMSLNVSR (359 aa)). Residues 360–575 (EILQQNRQIN…AFGITPALAR (216 aa)) are b. The segment at 576-656 (IYRASGQDVP…LLADLLSRSM (81 aa)) is c.

The protein belongs to the heat shock protein 90 family. As to quaternary structure, homodimer.

It is found in the cytoplasm. In terms of biological role, molecular chaperone. Has ATPase activity. The sequence is that of Chaperone protein HtpG from Mycobacterium leprae (strain TN).